The primary structure comprises 309 residues: Probable manganese-dependent inorganic pyrophosphatase (309 aa).

The Mn(2+) site is built by histidine 9, aspartate 13, aspartate 15, aspartate 75, histidine 97, and aspartate 149.

The protein belongs to the PPase class C family. Mn(2+) is required as a cofactor.

The protein resides in the cytoplasm. It carries out the reaction diphosphate + H2O = 2 phosphate + H(+). This chain is Probable manganese-dependent inorganic pyrophosphatase, found in Exiguobacterium sp. (strain ATCC BAA-1283 / AT1b).